Here is a 162-residue protein sequence, read N- to C-terminus: Shikimate kinase (162 aa).

11-16 (GSGKSS) contacts ATP. Position 15 (Ser-15) interacts with Mg(2+). Residues Asp-33, Arg-57, and Gly-80 each contribute to the substrate site. Residues 109–123 (NQKEREKRPLLNNLT) are LID domain. Arg-116 is an ATP binding site. Position 132 (Arg-132) interacts with substrate.

Belongs to the shikimate kinase family. Monomer. Requires Mg(2+) as cofactor.

It is found in the cytoplasm. It catalyses the reaction shikimate + ATP = 3-phosphoshikimate + ADP + H(+). Its pathway is metabolic intermediate biosynthesis; chorismate biosynthesis; chorismate from D-erythrose 4-phosphate and phosphoenolpyruvate: step 5/7. Its function is as follows. Catalyzes the specific phosphorylation of the 3-hydroxyl group of shikimic acid using ATP as a cosubstrate. The polypeptide is Shikimate kinase (aroK) (Helicobacter pylori (strain ATCC 700392 / 26695) (Campylobacter pylori)).